The primary structure comprises 71 residues: Stathmin-1-B (71 aa).

Residues 1–67 (KREHEKEVLQ…EIRKGKECKE (67 aa)) adopt a coiled-coil conformation. The 71-residue stretch at 1–71 (KREHEKEVLQ…GKECKEPSED (71 aa)) folds into the SLD domain.

The protein belongs to the stathmin family. In terms of assembly, binds to two alpha/beta-tubulin heterodimers. Post-translationally, from unphosphorylated forms to highly phosphorylated ones in the mature egg, followed by progressive dephosphorylation from the mid-blastula to the tailbud stage. In terms of tissue distribution, ubiquitous. Mostly abundant in brain and oocytes.

It localises to the cytoplasm. The protein resides in the cytoskeleton. Involved in the regulation of the microtubule (MT) filament system by destabilizing microtubules. It prevents assembly and promotes disassembly of microtubules. In Xenopus laevis (African clawed frog), this protein is Stathmin-1-B (stmn1-b).